Here is a 542-residue protein sequence, read N- to C-terminus: CTP synthase (542 aa).

The amidoligase domain stretch occupies residues 1–265; it reads MTRFIFITGG…DVQVCRHFHL (265 aa). S13 contacts CTP. S13 lines the UTP pocket. ATP is bound by residues 14–19 and D71; that span reads SLGKGL. Positions 71 and 139 each coordinate Mg(2+). CTP contacts are provided by residues 146–148, 186–191, and K222; these read DIE and KTKPTQ. UTP contacts are provided by residues 186–191 and K222; that span reads KTKPTQ. One can recognise a Glutamine amidotransferase type-1 domain in the interval 291-541; the sequence is TIAVVGKYTS…VQAAITQSRL (251 aa). Residue G353 participates in L-glutamine binding. The Nucleophile; for glutamine hydrolysis role is filled by C380. L-glutamine-binding positions include 381-384, E404, and R469; that span reads FGMQ. Residues H514 and E516 contribute to the active site.

Belongs to the CTP synthase family. In terms of assembly, homotetramer.

The catalysed reaction is UTP + L-glutamine + ATP + H2O = CTP + L-glutamate + ADP + phosphate + 2 H(+). It carries out the reaction L-glutamine + H2O = L-glutamate + NH4(+). The enzyme catalyses UTP + NH4(+) + ATP = CTP + ADP + phosphate + 2 H(+). It functions in the pathway pyrimidine metabolism; CTP biosynthesis via de novo pathway; CTP from UDP: step 2/2. Allosterically activated by GTP, when glutamine is the substrate; GTP has no effect on the reaction when ammonia is the substrate. The allosteric effector GTP functions by stabilizing the protein conformation that binds the tetrahedral intermediate(s) formed during glutamine hydrolysis. Inhibited by the product CTP, via allosteric rather than competitive inhibition. Functionally, catalyzes the ATP-dependent amination of UTP to CTP with either L-glutamine or ammonia as the source of nitrogen. Regulates intracellular CTP levels through interactions with the four ribonucleotide triphosphates. In Rhodospirillum rubrum (strain ATCC 11170 / ATH 1.1.1 / DSM 467 / LMG 4362 / NCIMB 8255 / S1), this protein is CTP synthase.